We begin with the raw amino-acid sequence, 372 residues long: Glutamate 5-kinase (372 aa).

Position 14 (lysine 14) interacts with ATP. Residues serine 54, aspartate 141, and asparagine 153 each contribute to the substrate site. Residue 173–174 coordinates ATP; sequence TD. A PUA domain is found at 280–358; the sequence is RGHVVIDDGA…GEIESVLGYM (79 aa).

The protein belongs to the glutamate 5-kinase family.

It is found in the cytoplasm. The catalysed reaction is L-glutamate + ATP = L-glutamyl 5-phosphate + ADP. It functions in the pathway amino-acid biosynthesis; L-proline biosynthesis; L-glutamate 5-semialdehyde from L-glutamate: step 1/2. Catalyzes the transfer of a phosphate group to glutamate to form L-glutamate 5-phosphate. This is Glutamate 5-kinase from Paraburkholderia phytofirmans (strain DSM 17436 / LMG 22146 / PsJN) (Burkholderia phytofirmans).